Here is a 246-residue protein sequence, read N- to C-terminus: Phosphomannomutase (246 aa).

Residue Asp-13 is the Nucleophile of the active site. 2 residues coordinate Mg(2+): Asp-13 and Asp-15. Asp-15 (proton donor/acceptor) is an active-site residue. The alpha-D-mannose 1-phosphate site is built by Arg-22, Arg-124, Arg-135, Arg-142, Ser-180, and Asp-182. Residues Asp-208, Tyr-220, and Thr-225 each contribute to the Mg(2+) site.

Belongs to the eukaryotic PMM family. As to quaternary structure, homodimer. The cofactor is Mg(2+). As to expression, expressed in roots, stems, leaves, flowers and immature fruits.

The protein resides in the cytoplasm. The catalysed reaction is alpha-D-mannose 1-phosphate = D-mannose 6-phosphate. It participates in nucleotide-sugar biosynthesis; GDP-alpha-D-mannose biosynthesis; alpha-D-mannose 1-phosphate from D-fructose 6-phosphate: step 2/2. Its function is as follows. Catalyzes the interconversion of mannose-6-phosphate to mannose-1-phosphate, the precursor for the synthesis of GDP-mannose. GDP-mannose is an essential sugar nucleotide for the synthesis of D-mannose-containing cell wall polysaccharides (galactomannans and glucomannans), glycolipids, glycoproteins and the antioxidant L-ascorbate. Can complement the yeast temperature-sensitive mutant sec53-6. The chain is Phosphomannomutase from Arabidopsis thaliana (Mouse-ear cress).